The chain runs to 141 residues: Holo-[acyl-carrier-protein] synthase (141 aa).

Positions 8 and 63 each coordinate Mg(2+).

Belongs to the P-Pant transferase superfamily. AcpS family. Mg(2+) serves as cofactor.

The protein resides in the cytoplasm. The enzyme catalyses apo-[ACP] + CoA = holo-[ACP] + adenosine 3',5'-bisphosphate + H(+). In terms of biological role, transfers the 4'-phosphopantetheine moiety from coenzyme A to a Ser of acyl-carrier-protein. The sequence is that of Holo-[acyl-carrier-protein] synthase from Rhodospirillum centenum (strain ATCC 51521 / SW).